Consider the following 200-residue polypeptide: Tegument protein UL55 homolog (200 aa).

Residues Met1 to Ser20 are compositionally biased toward basic and acidic residues. The interval Met1–Arg23 is disordered.

This sequence belongs to the alphaherpesvirinae HHV-1 UL55 family.

Its subcellular location is the virion tegument. It is found in the host nucleus matrix. The protein is Tegument protein UL55 homolog of Equine herpesvirus 1 (strain Ab4p) (EHV-1).